The following is a 446-amino-acid chain: Glutamine synthetase (446 aa).

Residues 14–106 (NNVKFIRFQF…VICDVYTTNG (93 aa)) form the GS beta-grasp domain. In terms of domain architecture, GS catalytic spans 113-446 (PRGCLKRVLA…DWETKQYLKI (334 aa)). Positions 137 and 139 each coordinate Mg(2+). Residue glutamate 187 participates in ATP binding. Residues glutamate 192 and glutamate 199 each coordinate Mg(2+). Residues 243–244 (NG) and glycine 244 contribute to the L-glutamate site. Position 248 (histidine 248) interacts with Mg(2+). ATP is bound by residues 250-252 (HQS) and serine 252. Positions 301, 307, and 319 each coordinate L-glutamate. ATP-binding residues include arginine 319, arginine 324, and lysine 331. Glutamate 336 is a Mg(2+) binding site. Arginine 338 lines the L-glutamate pocket.

It belongs to the glutamine synthetase family. Oligomer of 12 subunits arranged in the form of two hexagons. Mg(2+) is required as a cofactor.

The protein resides in the cytoplasm. It carries out the reaction L-glutamate + NH4(+) + ATP = L-glutamine + ADP + phosphate + H(+). Probably involved in nitrogen metabolism via ammonium assimilation. Catalyzes the ATP-dependent biosynthesis of glutamine from glutamate and ammonia. This is Glutamine synthetase from Methanococcus maripaludis (strain DSM 14266 / JCM 13030 / NBRC 101832 / S2 / LL).